Consider the following 469-residue polypeptide: Citrate synthase, mitochondrial (469 aa).

The transit peptide at methionine 1–serine 31 directs the protein to the mitochondrion. Residues histidine 304 and histidine 350 contribute to the active site. Arginine 359 contacts oxaloacetate. The active site involves aspartate 405. Positions 431 and 451 each coordinate oxaloacetate.

It belongs to the citrate synthase family. Homodimer.

The protein resides in the mitochondrion matrix. The enzyme catalyses oxaloacetate + acetyl-CoA + H2O = citrate + CoA + H(+). It participates in carbohydrate metabolism; tricarboxylic acid cycle; isocitrate from oxaloacetate: step 1/2. In terms of biological role, key enzyme of the Krebs tricarboxylic acid cycle which catalyzes the synthesis of citrate from acetyl coenzyme A and oxaloacetate. This Amblyrhynchus cristatus (Galapagos marine iguana) protein is Citrate synthase, mitochondrial (CS).